A 103-amino-acid chain; its full sequence is Glutaredoxin-C1 (103 aa).

Residues 1–102 (MDRVNRLAAQ…PLLRNAGALW (102 aa)) enclose the Glutaredoxin domain. C21 and C24 are oxidised to a cystine.

Belongs to the glutaredoxin family. CC-type subfamily.

The protein localises to the cytoplasm. In terms of biological role, has a glutathione-disulfide oxidoreductase activity in the presence of NADPH and glutathione reductase. Reduces low molecular weight disulfides and proteins. The sequence is that of Glutaredoxin-C1 (GRXC1) from Oryza sativa subsp. japonica (Rice).